A 302-amino-acid chain; its full sequence is Sulfate adenylyltransferase subunit 2 (302 aa).

Residues 280-302 (RQGRAIDHDQSGSMELKKRQGYF) are disordered.

The protein belongs to the PAPS reductase family. CysD subfamily. Heterodimer composed of CysD, the smaller subunit, and CysN.

It catalyses the reaction sulfate + ATP + H(+) = adenosine 5'-phosphosulfate + diphosphate. It participates in sulfur metabolism; hydrogen sulfide biosynthesis; sulfite from sulfate: step 1/3. Its function is as follows. With CysN forms the ATP sulfurylase (ATPS) that catalyzes the adenylation of sulfate producing adenosine 5'-phosphosulfate (APS) and diphosphate, the first enzymatic step in sulfur assimilation pathway. APS synthesis involves the formation of a high-energy phosphoric-sulfuric acid anhydride bond driven by GTP hydrolysis by CysN coupled to ATP hydrolysis by CysD. The sequence is that of Sulfate adenylyltransferase subunit 2 from Vibrio vulnificus (strain CMCP6).